Reading from the N-terminus, the 920-residue chain is Isoleucine--tRNA ligase (920 aa).

A 'HIGH' region motif is present at residues 58–68; the sequence is PYANGHLHLGH. Glu569 provides a ligand contact to L-isoleucyl-5'-AMP. The short motif at 610–614 is the 'KMSKS' region element; that stretch reads KMSKS. Lys613 contributes to the ATP binding site. Zn(2+) contacts are provided by Cys895, Cys898, Cys910, and Cys913.

It belongs to the class-I aminoacyl-tRNA synthetase family. IleS type 1 subfamily. As to quaternary structure, monomer. Requires Zn(2+) as cofactor.

It localises to the cytoplasm. It catalyses the reaction tRNA(Ile) + L-isoleucine + ATP = L-isoleucyl-tRNA(Ile) + AMP + diphosphate. In terms of biological role, catalyzes the attachment of isoleucine to tRNA(Ile). As IleRS can inadvertently accommodate and process structurally similar amino acids such as valine, to avoid such errors it has two additional distinct tRNA(Ile)-dependent editing activities. One activity is designated as 'pretransfer' editing and involves the hydrolysis of activated Val-AMP. The other activity is designated 'posttransfer' editing and involves deacylation of mischarged Val-tRNA(Ile). This is Isoleucine--tRNA ligase from Helicobacter pylori (strain J99 / ATCC 700824) (Campylobacter pylori J99).